A 300-amino-acid polypeptide reads, in one-letter code: MHDFPDIDFTQRFIFDESDVRGELVALERSYAEVLAKHPYPEPVAQLLGELMAAAALLVGTLKFDGLLILQARSSGAVPLLMVECSSERELRGIARYDEALITPGAGLQDLMPDGSLALTVDPRQGKRYQGIVALDGVDLSESLSNYFVMSEQLGTRFWLKADGHRARGLLLQQLPAAQITDPEERDASWEHVVTLASTLTAEEMLSLDNQTVLHRLYHEDPVRLFDVQPICFRCSCSRERSANALASLGLEDAQQLVIEHNGSIEIDCQFCNERYLFDATDVAQLFAGGGVDSPSDTRH.

2 cysteine pairs are disulfide-bonded: Cys-235/Cys-237 and Cys-269/Cys-272.

It belongs to the HSP33 family. Post-translationally, under oxidizing conditions two disulfide bonds are formed involving the reactive cysteines. Under reducing conditions zinc is bound to the reactive cysteines and the protein is inactive.

It is found in the cytoplasm. Redox regulated molecular chaperone. Protects both thermally unfolding and oxidatively damaged proteins from irreversible aggregation. Plays an important role in the bacterial defense system toward oxidative stress. The chain is 33 kDa chaperonin from Pseudomonas syringae pv. tomato (strain ATCC BAA-871 / DC3000).